Consider the following 239-residue polypeptide: tRNA uridine(34) hydroxylase (239 aa).

Residues 124–214 (QGRELVMLDT…GILKYFEETD (91 aa)) enclose the Rhodanese domain. Cys-178 (cysteine persulfide intermediate) is an active-site residue.

Belongs to the TrhO family.

The enzyme catalyses uridine(34) in tRNA + AH2 + O2 = 5-hydroxyuridine(34) in tRNA + A + H2O. Functionally, catalyzes oxygen-dependent 5-hydroxyuridine (ho5U) modification at position 34 in tRNAs. The chain is tRNA uridine(34) hydroxylase from Bordetella parapertussis (strain 12822 / ATCC BAA-587 / NCTC 13253).